The primary structure comprises 201 residues: MILITYTKPLSKLIGHFEKFPGIGPRTAQRLALFILKQPESTIRDFSEALLEAHSNVGRCKKCFNLTSEDECEICKNTQRNQKLICVVAETKDLLALERAREFKGVYHVIGGLISPMDSVGPELLEIRSLVERVSKSEIDEIILALTPSVEGDTTSLYIGKLLAPFTKVTRIAYGLPMGSELEYVDEVTLARALEGRTNLN.

The segment at 60 to 75 (CKKCFNLTSEDECEIC) adopts a C4-type zinc-finger fold. The 95-residue stretch at 83–177 (KLICVVAETK…KVTRIAYGLP (95 aa)) folds into the Toprim domain.

The protein belongs to the RecR family.

Functionally, may play a role in DNA repair. It seems to be involved in an RecBC-independent recombinational process of DNA repair. It may act with RecF and RecO. In Prochlorococcus marinus (strain MIT 9215), this protein is Recombination protein RecR.